A 100-amino-acid chain; its full sequence is UPF0235 protein TC_0667 (100 aa).

Belongs to the UPF0235 family.

In Chlamydia muridarum (strain MoPn / Nigg), this protein is UPF0235 protein TC_0667.